Consider the following 186-residue polypeptide: Protein GrpE (186 aa).

Over residues 1-22 the composition is skewed to basic and acidic residues; the sequence is MSDSNKEKKKKFADMVSKRKGD. Residues 1–35 are disordered; the sequence is MSDSNKEKKKKFADMVSKRKGDDQEDQQTGDLSEE. The span at 23–34 shows a compositional bias: acidic residues; sequence DQEDQQTGDLSE.

Belongs to the GrpE family. In terms of assembly, homodimer.

It is found in the cytoplasm. Functionally, participates actively in the response to hyperosmotic and heat shock by preventing the aggregation of stress-denatured proteins, in association with DnaK and GrpE. It is the nucleotide exchange factor for DnaK and may function as a thermosensor. Unfolded proteins bind initially to DnaJ; upon interaction with the DnaJ-bound protein, DnaK hydrolyzes its bound ATP, resulting in the formation of a stable complex. GrpE releases ADP from DnaK; ATP binding to DnaK triggers the release of the substrate protein, thus completing the reaction cycle. Several rounds of ATP-dependent interactions between DnaJ, DnaK and GrpE are required for fully efficient folding. The protein is Protein GrpE of Wolbachia pipientis subsp. Culex pipiens (strain wPip).